The sequence spans 338 residues: Ketol-acid reductoisomerase (NADP(+)) (338 aa).

The region spanning 1–181 (MKVFYDKDCD…GGGKAGIIET (181 aa)) is the KARI N-terminal Rossmann domain. NADP(+) contacts are provided by residues 24-27 (YGSQ), arginine 47, and serine 52. Histidine 107 is a catalytic residue. Glycine 133 is a binding site for NADP(+). The region spanning 182 to 327 (NFKEETETDL…AQLRAMMPWI (146 aa)) is the KARI C-terminal knotted domain. Aspartate 190, glutamate 194, glutamate 226, and glutamate 230 together coordinate Mg(2+). Residue serine 251 participates in substrate binding.

It belongs to the ketol-acid reductoisomerase family. It depends on Mg(2+) as a cofactor.

The catalysed reaction is (2R)-2,3-dihydroxy-3-methylbutanoate + NADP(+) = (2S)-2-acetolactate + NADPH + H(+). It catalyses the reaction (2R,3R)-2,3-dihydroxy-3-methylpentanoate + NADP(+) = (S)-2-ethyl-2-hydroxy-3-oxobutanoate + NADPH + H(+). It participates in amino-acid biosynthesis; L-isoleucine biosynthesis; L-isoleucine from 2-oxobutanoate: step 2/4. Its pathway is amino-acid biosynthesis; L-valine biosynthesis; L-valine from pyruvate: step 2/4. Involved in the biosynthesis of branched-chain amino acids (BCAA). Catalyzes an alkyl-migration followed by a ketol-acid reduction of (S)-2-acetolactate (S2AL) to yield (R)-2,3-dihydroxy-isovalerate. In the isomerase reaction, S2AL is rearranged via a Mg-dependent methyl migration to produce 3-hydroxy-3-methyl-2-ketobutyrate (HMKB). In the reductase reaction, this 2-ketoacid undergoes a metal-dependent reduction by NADPH to yield (R)-2,3-dihydroxy-isovalerate. This chain is Ketol-acid reductoisomerase (NADP(+)), found in Acidovorax ebreus (strain TPSY) (Diaphorobacter sp. (strain TPSY)).